The following is a 264-amino-acid chain: uncharacterized protein (264 aa).

A run of 6 helical transmembrane segments spans residues M1 to L21, F43 to V63, V95 to L115, I146 to L166, G181 to V201, and I215 to P235.

To M.pneumoniae MPN_308 C-terminal region.

It localises to the cell membrane. This is an uncharacterized protein from Mycoplasma pneumoniae (strain ATCC 29342 / M129 / Subtype 1) (Mycoplasmoides pneumoniae).